The following is a 109-amino-acid chain: Probable sulredoxin (109 aa).

One can recognise a Rieske domain in the interval W3–V107. The [2Fe-2S] cluster site is built by C43, H45, C62, and H65.

This sequence belongs to the SDX family. It depends on [2Fe-2S] cluster as a cofactor.

It is found in the cytoplasm. The sequence is that of Probable sulredoxin (sdx) from Saccharolobus solfataricus (strain ATCC 35092 / DSM 1617 / JCM 11322 / P2) (Sulfolobus solfataricus).